A 264-amino-acid polypeptide reads, in one-letter code: Tropinone reductase homolog At5g06060 (264 aa).

An NADP(+)-binding site is contributed by 15-39; the sequence is LVTGGTRGIGRAVVEELAKFGAKVH. Serine 148 contacts substrate. Catalysis depends on tyrosine 161, which acts as the Proton acceptor.

The protein belongs to the short-chain dehydrogenases/reductases (SDR) family. SDR65C subfamily.

This is Tropinone reductase homolog At5g06060 from Arabidopsis thaliana (Mouse-ear cress).